The sequence spans 527 residues: 4-alpha-glucanotransferase (527 aa).

Belongs to the disproportionating enzyme family.

The protein localises to the cytoplasm. It catalyses the reaction Transfers a segment of a (1-&gt;4)-alpha-D-glucan to a new position in an acceptor, which may be glucose or a (1-&gt;4)-alpha-D-glucan.. This is 4-alpha-glucanotransferase (malQ) from Chlamydia muridarum (strain MoPn / Nigg).